Consider the following 67-residue polypeptide: Large ribosomal subunit protein uL29 (67 aa).

Belongs to the universal ribosomal protein uL29 family.

This is Large ribosomal subunit protein uL29 from Clostridioides difficile (strain 630) (Peptoclostridium difficile).